A 352-amino-acid chain; its full sequence is Nicotinate-nucleotide--dimethylbenzimidazole phosphoribosyltransferase (352 aa).

Residue E318 is the Proton acceptor of the active site.

The protein belongs to the CobT family.

It carries out the reaction 5,6-dimethylbenzimidazole + nicotinate beta-D-ribonucleotide = alpha-ribazole 5'-phosphate + nicotinate + H(+). It participates in nucleoside biosynthesis; alpha-ribazole biosynthesis; alpha-ribazole from 5,6-dimethylbenzimidazole: step 1/2. In terms of biological role, catalyzes the synthesis of alpha-ribazole-5'-phosphate from nicotinate mononucleotide (NAMN) and 5,6-dimethylbenzimidazole (DMB). This Dehalococcoides mccartyi (strain CBDB1) protein is Nicotinate-nucleotide--dimethylbenzimidazole phosphoribosyltransferase.